Consider the following 355-residue polypeptide: F-box protein At1g31080 (355 aa).

Residues glycine 4 to leucine 49 enclose the F-box domain. A compositionally biased stretch (polar residues) spans alanine 306 to serine 320. Positions alanine 306–glutamine 333 are disordered. Residues serine 321–glutamine 333 show a composition bias toward basic and acidic residues.

This chain is F-box protein At1g31080, found in Arabidopsis thaliana (Mouse-ear cress).